Consider the following 395-residue polypeptide: MPLRSTFTRFFAMEAASGLLLIAAAILALIINNSPLSWLYNGLLETPVVAQVGALKIAKPLLLWINDGLMALFFLLIGLEVKREVLEGQLAKPSQIVLPGAAAIGGMLVPALIYWFLNRDNPPALNGWAIPTATDIAFALGVLALLGKRVPTSLKLFLMTLAIIDDLGAIVIIAIFYSGTLSTLSLMLAGACIAALVAMNRMGVVKLGPYMIIGLILWVCVLKSGVHATLAGVTLAFCIPLRTRNAEPSPLKALEHALHPWVSFGILPLFAFANAGLSLSGVTLESFTHHVPMGIAVGLLLGKTIGVFGLTWMAVKTGIAALPSGANWGQVLGVAILCGIGFTMSLFVGSLAFEPGSSEYAGMDRMGILTGSLFAALIGYAVTAAASRRNNTLAS.

11 helical membrane passes run 11–31, 61–81, 96–116, 127–147, 156–176, 179–199, 202–222, 264–284, 295–315, 331–351, and 366–386; these read FAMEAASGLLLIAAAILALII, LLLWINDGLMALFFLLIGLEV, IVLPGAAAIGGMLVPALIYWF, GWAIPTATDIAFALGVLALLG, LFLMTLAIIDDLGAIVIIAIF, GTLSTLSLMLAGACIAALVAM, MGVVKLGPYMIIGLILWVCVL, FGILPLFAFANAGLSLSGVTL, IAVGLLLGKTIGVFGLTWMAV, VLGVAILCGIGFTMSLFVGSL, and MGILTGSLFAALIGYAVTAAA.

Belongs to the NhaA Na(+)/H(+) (TC 2.A.33) antiporter family.

It localises to the cell inner membrane. It carries out the reaction Na(+)(in) + 2 H(+)(out) = Na(+)(out) + 2 H(+)(in). Na(+)/H(+) antiporter that extrudes sodium in exchange for external protons. This chain is Na(+)/H(+) antiporter NhaA, found in Pseudomonas fluorescens (strain ATCC BAA-477 / NRRL B-23932 / Pf-5).